The sequence spans 402 residues: Beta sliding clamp (402 aa).

It belongs to the beta sliding clamp family. In terms of assembly, forms a ring-shaped head-to-tail homodimer around DNA which binds and tethers DNA polymerases and other proteins to the DNA. The DNA replisome complex has a single clamp-loading complex (3 tau and 1 each of delta, delta', psi and chi subunits) which binds 3 Pol III cores (1 core on the leading strand and 2 on the lagging strand) each with a beta sliding clamp dimer. Additional proteins in the replisome are other copies of gamma, psi and chi, Ssb, DNA helicase and RNA primase.

The protein resides in the cytoplasm. Confers DNA tethering and processivity to DNA polymerases and other proteins. Acts as a clamp, forming a ring around DNA (a reaction catalyzed by the clamp-loading complex) which diffuses in an ATP-independent manner freely and bidirectionally along dsDNA. Initially characterized for its ability to contact the catalytic subunit of DNA polymerase III (Pol III), a complex, multichain enzyme responsible for most of the replicative synthesis in bacteria; Pol III exhibits 3'-5' exonuclease proofreading activity. The beta chain is required for initiation of replication as well as for processivity of DNA replication. The protein is Beta sliding clamp (dnaN) of Mycobacterium bovis (strain ATCC BAA-935 / AF2122/97).